Reading from the N-terminus, the 300-residue chain is Pleckstrin homology domain-containing family A member 3 (300 aa).

A PH domain is found at 1–93 (MEGVLYKWTN…WLVALGSSKA (93 aa)). An interaction with SACM1L region spans residues 1-100 (MEGVLYKWTN…SKACLTDTRT (100 aa)). Positions 97-300 (DTRTKKEKEI…SEDTLPSFSS (204 aa)) are interaction with VAPA and VAPB. The tract at residues 197–300 (PVSPSPVQMM…SEDTLPSFSS (104 aa)) is disordered. Serine 236 and serine 244 each carry phosphoserine. A compositionally biased stretch (basic and acidic residues) spans 279-290 (EESRLMAKKQSE).

In terms of assembly, interacts with GTP-bound ARF1. Interacts with SACM1L and VAPA and/or VAPB to form a ternary complex. As to expression, widely expressed.

The protein localises to the golgi apparatus. It is found in the trans-Golgi network membrane. Plays a role in regulation of vesicular cargo transport from the trans-Golgi network (TGN) to the plasma membrane. Regulates Golgi phosphatidylinositol 4-phosphate (PtdIns(4)P) levels and activates the PtdIns(4)P phosphatase activity of SACM1L when it binds PtdIns(4)P in 'trans' configuration. Binds preferentially to PtdIns(4)P. Negatively regulates APOB secretion from hepatocytes. The chain is Pleckstrin homology domain-containing family A member 3 (PLEKHA3) from Homo sapiens (Human).